We begin with the raw amino-acid sequence, 259 residues long: Protein-tyrosine phosphatase RolB (259 aa).

Residues 219-259 (GISRPAASSPEPDLTLRLSGPDQEGEEGVMKPAAVNLKKEA) form a disordered region.

It carries out the reaction O-phospho-L-tyrosyl-[protein] + H2O = L-tyrosyl-[protein] + phosphate. Induces differentiation and growth of neoplastic roots (hairy roots). Seems to function as a tyrosine phosphatase. The chain is Protein-tyrosine phosphatase RolB (rolB) from Rhizobium rhizogenes (Agrobacterium rhizogenes).